Reading from the N-terminus, the 103-residue chain is Large ribosomal subunit protein uL24 (103 aa).

It belongs to the universal ribosomal protein uL24 family. Part of the 50S ribosomal subunit.

In terms of biological role, one of two assembly initiator proteins, it binds directly to the 5'-end of the 23S rRNA, where it nucleates assembly of the 50S subunit. Its function is as follows. One of the proteins that surrounds the polypeptide exit tunnel on the outside of the subunit. The protein is Large ribosomal subunit protein uL24 of Haemophilus influenzae (strain 86-028NP).